The chain runs to 345 residues: MSVTGGKMAPSLTQEILSHLGLASKTAAWGTLGTLRTFLNFSVDKDAQRLLRAITGQGVDRSAIVDVLTNRSREQRQLISRNFQERTQQDLMKSLQAALSGNLERIVMALLQPTAQFDAQELRTALKASDSAVDVAIEILATRTPPQLQECLAVYKHNFQVEAVDDITSETSGILQDLLLALAKGGRDSYSGIIDYNLAEQDVQALQRAEGPSREETWVPVFTQRNPEHLIRVFDQYQRSTGQELEEAVQNRFHGDAQVALLGLASVIKNTPLYFADKLHQALQETEPNYQVLIRILISRCETDLLSIRAEFRKKFGKSLYSSLQDAVKGDCQSALLALCRAEDM.

Annexin repeat units lie at residues phenylalanine 41–glutamine 112, proline 113–lysine 184, asparagine 197–serine 266, and asparagine 270–arginine 341.

This sequence belongs to the annexin family. In terms of assembly, homodimer. As to expression, expressed in the stratified squamous skin epithelium, but not in epithelia of other types (at protein level).

Low affinity receptor for acetylcholine known to be targeted by disease-causing pemphigus vulgaris antibodies in keratinocytes. This is Annexin A9 (ANXA9) from Homo sapiens (Human).